Consider the following 402-residue polypeptide: MRSRQLHNVSEDRETLSRRNKRSKTSLNGHIPIDLLIEIFLKLPVKSIATCRSVSKFWTYVLGRQDFTELFLTKSSSRPQLLFACANDNGYFFFSSNQPQNLDENSSPIAAYPLTHVPKSRDLGPPINGLVSLRGERILKGRIRPVDVSIIYNPSTGESLTLPKTNMTRKKIYTVTSFLGYDPIEKQYKVLSMNMSYEKHPKCEGYQVLTLGTGKLSWRMIKCCLNYQHPLKNSEICINGVLYYLAMVNGSSWPTRAVVCFDIRSEMFNFMEVYRELSYTTTLINYNNGKLGMLMGQEAHKTISGICRSFELWVLEDTVKHEWSKHVYLLPPLWKDAVANTRLYFAGMIGTSEIVLFRPDEPLCVFYYNIDRNTIKRVGIRGLEAFKYFRIFLNHVENVKLF.

A disordered region spans residues 1–23 (MRSRQLHNVSEDRETLSRRNKRS). The 48-residue stretch at 26–73 (SLNGHIPIDLLIEIFLKLPVKSIATCRSVSKFWTYVLGRQDFTELFLT) folds into the F-box domain.

This chain is Putative F-box protein At3g23960, found in Arabidopsis thaliana (Mouse-ear cress).